The sequence spans 3333 residues: Laminin subunit alpha-3 (3333 aa).

The first 35 residues, 1–35, serve as a signal peptide directing secretion; sequence MAAAARPRGRALGPVLPPTPLLLLVLRVLPACGAT. One can recognise a Laminin N-terminal domain in the interval 43–298; the sequence is AGLSLHPTYF…SIKDISIGGQ (256 aa). N-linked (GlcNAc...) asparagine glycans are attached at residues N142 and N242. A domain V region spans residues 298–728; sequence QCVCNGHAEV…NNYYFPDLHH (431 aa). 29 disulfide bridges follow: C299/C308, C301/C319, C321/C330, C333/C353, C356/C365, C358/C390, C393/C402, C405/C423, C426/C436, C428/C443, C445/C454, C457/C467, C491/C503, C493/C509, C511/C520, C523/C533, C536/C548, C538/C555, C557/C566, C569/C586, C601/C610, C613/C628, C631/C645, C633/C652, C654/C663, C666/C681, C684/C696, C686/C703, and C705/C714. 8 consecutive Laminin EGF-like domains span residues 299–355, 356–425, 426–469, 491–535, 536–588, 590–630, 631–683, and 684–728; these read CVCN…ECEA, CNCH…GCIP, CSCD…FCLR, CDCN…ICQA, CWCS…ACDP, GTIN…GCSE, CKCH…GCQG, and CQCD…DLHH. The tract at residues 796-1265 is domain IV 1 (domain IV B); that stretch reads TEAVSGHITI…VAFYHKGALP (470 aa). 16 disulfides stabilise this stretch: C1266-C1278, C1268-C1285, C1287-C1296, C1299-C1309, C1312-C1319, C1314-C1326, C1328-C1337, C1340-C1353, C1356-C1371, C1358-C1378, C1380-C1389, C1392-C1402, C1405-C1417, C1407-C1424, C1426-C1435, and C1438-C1453. 4 consecutive Laminin EGF-like domains span residues 1266-1311, 1312-1355, 1356-1404, and 1405-1455; these read CECH…RCKP, CSCG…GCEG, CNCS…ECVP, and CNCN…GCTS. Residues 1266–1465 are domain III B; the sequence is CECHPTGATG…CFCFGVNNQC (200 aa). In terms of domain architecture, Laminin IV type A spans 1476 to 1653; that stretch reads VDMLGWHLET…SGRIALAVEI (178 aa). Positions 1654–1821 are domain III A; that stretch reads CACPPAYAGD…DSSPAEECDD (168 aa). Disulfide bonds link C1687/C1696, C1689/C1703, C1706/C1715, C1718/C1731, C1734/C1746, C1736/C1755, C1757/C1766, and C1769/C1784. 2 consecutive Laminin EGF-like domains span residues 1687 to 1733 and 1734 to 1786; these read CNCN…SCRA and CPCP…SCQP. The Laminin EGF-like 15; truncated domain occupies 1787–1821; the sequence is CSCNSNGQLGSCHPLTGDCINQEPKDSSPAEECDD. The segment at 1822–2389 is domain II and I; it reads CDSCVMTLLN…ARDAASKVAV (568 aa). 2 coiled-coil regions span residues 1852–1941 and 1987–2169; these read ASAG…KNVI and KHLR…DELV. The short motif at 2278–2280 is the Cell attachment site element; it reads RGD. The stretch at 2322-2388 forms a coiled coil; it reads RTQNEDFKKA…QARDAASKVA (67 aa). N2365, N2502, and N2584 each carry an N-linked (GlcNAc...) asparagine glycan. Laminin G-like domains lie at 2390-2591, 2598-2760, 2767-2927, 2986-3150, and 3157-3330; these read PMRF…VEPC, SDKN…TKKC, VRSA…LGGC, ALQF…VSSC, and KGIY…LNGC. 5 disulfide bridges follow: C2561/C2591, C2737/C2760, C2895/C2927, C3127/C3150, and C3302/C3330.

In terms of assembly, laminin is a complex glycoprotein, consisting of three different polypeptide chains (alpha, beta, gamma), which are bound to each other by disulfide bonds into a cross-shaped molecule comprising one long and three short arms with globules at each end. Alpha-3 is a subunit of laminin-5 (laminin-332 or epiligrin/kalinin/nicein), laminin-6 (laminin-311 or K-laminin) and laminin-7 (laminin-321 or KS-laminin). In terms of tissue distribution, skin; respiratory, urinary, and digestive epithelia and in other specialized tissues with prominent secretory or protective functions. Epithelial basement membrane, and epithelial cell tongue that migrates into a wound bed. A differential and focal expression of the subunit alpha-3 is observed in the CNS.

Its subcellular location is the secreted. It is found in the extracellular space. The protein localises to the extracellular matrix. It localises to the basement membrane. Functionally, binding to cells via a high affinity receptor, laminin is thought to mediate the attachment, migration and organization of cells into tissues during embryonic development by interacting with other extracellular matrix components. In terms of biological role, laminin-5 is thought to be involved in (1) cell adhesion via integrin alpha-3/beta-1 in focal adhesion and integrin alpha-6/beta-4 in hemidesmosomes, (2) signal transduction via tyrosine phosphorylation of pp125-FAK and p80, (3) differentiation of keratinocytes. In Homo sapiens (Human), this protein is Laminin subunit alpha-3 (LAMA3).